We begin with the raw amino-acid sequence, 155 residues long: uncharacterized protein (155 aa).

This is an uncharacterized protein from Rickettsia prowazekii (strain Madrid E).